A 325-amino-acid chain; its full sequence is Lipid droplet-associated hydrolase (325 aa).

Serine 139 functions as the Nucleophile in the catalytic mechanism. Active-site charge relay system residues include aspartate 271 and histidine 300.

It belongs to the AB hydrolase superfamily. LDAH family.

It localises to the lipid droplet. It is found in the endoplasmic reticulum. The catalysed reaction is a cholesterol ester + H2O = cholesterol + a fatty acid + H(+). Functionally, probable serine lipid hydrolase associated with lipid droplets. Has low cholesterol esterase activity. Appears to lack triglyceride lipase activity. Involved in cholesterol and triglyceride homeostasis; stimulates cellular triglyceride accumulation and cellular cholesterol release. Acts antagonistically with PNPLA2/ATGL in regulation of cellular lipid stores. May regulate triglyceride accumulation indirectly through stimulation of PNPLA2/ATGL ubiquitination and proteasomal degradation. Promotes microtubule-dependent lipid droplet fusion. Highly expressed in macrophage-rich areas in atherosclerotic lesions, suggesting that it could promote cholesterol ester turnover in macrophages. The protein is Lipid droplet-associated hydrolase of Pongo abelii (Sumatran orangutan).